The primary structure comprises 356 residues: Protein-glutamate methylesterase/protein-glutamine glutaminase 2 (356 aa).

The region spanning 4–121 (RALVVDDSAL…SQSMPEMAEE (118 aa)) is the Response regulatory domain. Asp55 carries the post-translational modification 4-aspartylphosphate. One can recognise a CheB-type methylesterase domain in the interval 161–356 (KAAPRNILAI…MAEEIIRIIG (196 aa)). Catalysis depends on residues Ser173, His200, and Asp300.

The protein belongs to the CheB family. In terms of processing, phosphorylated by CheA. Phosphorylation of the N-terminal regulatory domain activates the methylesterase activity.

Its subcellular location is the cytoplasm. The enzyme catalyses [protein]-L-glutamate 5-O-methyl ester + H2O = L-glutamyl-[protein] + methanol + H(+). It carries out the reaction L-glutaminyl-[protein] + H2O = L-glutamyl-[protein] + NH4(+). Involved in chemotaxis. Part of a chemotaxis signal transduction system that modulates chemotaxis in response to various stimuli. Catalyzes the demethylation of specific methylglutamate residues introduced into the chemoreceptors (methyl-accepting chemotaxis proteins or MCP) by CheR. Also mediates the irreversible deamidation of specific glutamine residues to glutamic acid. The chain is Protein-glutamate methylesterase/protein-glutamine glutaminase 2 from Methanosarcina acetivorans (strain ATCC 35395 / DSM 2834 / JCM 12185 / C2A).